A 102-amino-acid chain; its full sequence is Protein S100-A11 (102 aa).

Ser-2 is modified (phosphoserine). At Thr-7 the chain carries Phosphothreonine. 2 consecutive EF-hand domains span residues 12-47 (ESLIAVFQKYAGKDGHSVTLSKTEFLSFMNTELAAF) and 52-87 (KDPGVLDRMMKKLDLNSDGQLDFQEFLNLIGGLAVA). Lys-24 carries the post-translational modification N6-acetyllysine. Ca(2+) is bound by residues Ser-28, Thr-30, Glu-35, Asp-65, Asn-67, Asp-69, Gln-71, and Glu-76.

The protein belongs to the S-100 family. In terms of assembly, homodimer; disulfide-linked. Phosphorylation at Thr-7 significantly suppresses homodimerization and promotes association with NCL/nucleolin which induces nuclear translocation. Smooth muscle and non-muscle tissues.

Its subcellular location is the cytoplasm. It is found in the nucleus. Functionally, facilitates the differentiation and the cornification of keratinocytes. The sequence is that of Protein S100-A11 (S100A11) from Oryctolagus cuniculus (Rabbit).